A 365-amino-acid chain; its full sequence is Peptide chain release factor 2 (365 aa).

The residue at position 252 (glutamine 252) is an N5-methylglutamine.

The protein belongs to the prokaryotic/mitochondrial release factor family. Methylated by PrmC. Methylation increases the termination efficiency of RF2.

The protein resides in the cytoplasm. Peptide chain release factor 2 directs the termination of translation in response to the peptide chain termination codons UGA and UAA. This chain is Peptide chain release factor 2, found in Aeromonas salmonicida (strain A449).